Here is a 434-residue protein sequence, read N- to C-terminus: RNA-binding protein SRO9 (434 aa).

A compositionally biased stretch (low complexity) spans 1–13 (MSAETAAANTATA). The segment at 1 to 243 (MSAETAAANT…FHHNQQHPQQ (243 aa)) is disordered. The segment covering 26-41 (SKQVNLTPAPLPTSSP) has biased composition (polar residues). Phosphoserine is present on serine 55. Residues 93 to 124 (KRSGSKNGASNGNSNKSKNNKTAASSTSSSNA) show a composition bias toward low complexity. Residues 125-140 (NRKKKHHQHNAKKQQQ) are compositionally biased toward basic residues. Serine 148 is subject to Phosphoserine. A Glycyl lysine isopeptide (Lys-Gly) (interchain with G-Cter in ubiquitin) cross-link involves residue lysine 156. Over residues 158-167 (ATSQENGQST) the composition is skewed to polar residues. Over residues 173–195 (PHHRNHHHSHHHNSNGPQRRKFH) the composition is skewed to basic residues. Residues 196–208 (NSNNAGMPQNQGF) are compositionally biased toward polar residues. Over residues 218-227 (RNARNNNNNR) the composition is skewed to low complexity. A compositionally biased stretch (basic residues) spans 228–238 (SKYHNHFHHNQ). The 97-residue stretch at 255–351 (VQPVLMAINN…KEGDNVTGEA (97 aa)) folds into the HTH La-type RNA-binding domain. Residues lysine 301, lysine 342, and lysine 352 each participate in a glycyl lysine isopeptide (Lys-Gly) (interchain with G-Cter in ubiquitin) cross-link. The segment at 396–434 (SLPPVPQQEEESSTELASQEQETKEDSAPVAAGESESSL) is disordered. Position 422 is a phosphoserine (serine 422).

Interacts with HAP1. Component of the HMC including HAP1, SRO9 and YDJ1.

Its subcellular location is the cytoplasm. In terms of biological role, may overlap in function with tropomyosin and may be involved in organization of actin filaments. Acts as a multicopy suppressor of RHO3 mutation. RNA-binding protein which may modulate mRNA translation. Involved in heme regulation of HAP1, as a component of the high-molecular-weight complex (HMC). The polypeptide is RNA-binding protein SRO9 (SRO9) (Saccharomyces cerevisiae (strain ATCC 204508 / S288c) (Baker's yeast)).